Consider the following 657-residue polypeptide: DALGTGNAQKQQDINHLLDKIYEPTKYPDLKEIAENFNPLGDTSIYNDHGAAVETLMKELNDHRLLEQRHWYSLFNTRQRKEALMLFAVLNQCKEWYCFRSNAAYFRERMNEGEFVYALYVSVIHSKLGDGIVLPPLYQITPHMFTNSEVIDKAYSAKMTQKQGTFNVSFTGTKKNREQRVAYFGEDIGMNIHHVTWHMDFPFWWEDSYGYHLDRKGELFFWVHHQLTARFDFERLSNWLDPVDELHWDRIIREGFAPLTSYKYGGEFPVRPDNIHFEDVDGVAHVHDLEITESRIHEAIDHGYITDSDGHTIDIRQPKGIELLGDIIESSKYSSNVQYYGSLHNTAHVMLGRQGDPHGKFNLPPGVMEHFETATRDPSFFRLHKYMDNIFKKHTDSFPPYTHDNLEFSGMVVNGVAIDGELITFFDEFQYSLINAVDSGENIEDVEINARVHRLNHKEFTYKITMSNNNDGERLATFRIFLCPIEDNNGITLTLDEARWFCIELDKFFQKVPKGPETIERSSKDSSVTVPDMPSFQSLKEQADNAVNGGHDLDLSAYERSCGIPDRMLLPKSKPEGMEFNLYVAVTDGDKDTEGHNGGHDYGGTHAQCGVHGEAYPDNRPLGYPLERRIPDERVIDGVSNIKHVVVKIVHHLEHHD.

Residues Cys93 and Cys98 are joined by a disulfide bond. Asn167 carries an N-linked (GlcNAc...) asparagine glycan. 6 residues coordinate Cu cation: His194, His198, His224, His344, His348, and His384. Intrachain disulfides connect Cys483–Cys502 and Cys562–Cys609. Residues 594-616 are disordered; the sequence is EGHNGGHDYGGTHAQCGVHGEAY.

The protein belongs to the tyrosinase family. Hemocyanin subfamily. Hexamer of a number of different chains, of which A, B, and C have been identified. Hemolymph.

It localises to the secreted. The protein resides in the extracellular space. Hemocyanins are copper-containing oxygen carriers occurring freely dissolved in the hemolymph of many mollusks and arthropods. This is Hemocyanin A chain from Panulirus interruptus (California spiny lobster).